The primary structure comprises 191 residues: Ribosomal RNA small subunit methyltransferase G (191 aa).

S-adenosyl-L-methionine is bound by residues Gly62, Phe67, 111–112, and Arg124; that span reads IE.

Belongs to the methyltransferase superfamily. RNA methyltransferase RsmG family.

The protein localises to the cytoplasm. It catalyses the reaction guanosine(527) in 16S rRNA + S-adenosyl-L-methionine = N(7)-methylguanosine(527) in 16S rRNA + S-adenosyl-L-homocysteine. Functionally, specifically methylates the N7 position of guanine in position 527 of 16S rRNA. The sequence is that of Ribosomal RNA small subunit methyltransferase G from Rickettsia prowazekii (strain Madrid E).